A 957-amino-acid chain; its full sequence is SH3 domain-binding protein 4-A (957 aa).

The 60-residue stretch at 54–113 (ENVKEVVAIKDYCPNNFTTLKFSKGEHLYVLDASGGDWWYAHNSTEMGYIPSSYVQPLNY) folds into the SH3 1 domain. Residues 312–449 (TSIVCRLDSS…LEPVMYVVMV (138 aa)) enclose the ZU5 domain. The SH3 2 domain occupies 649 to 719 (TSLKYGKLLK…HAKNVLVVGK (71 aa)).

In terms of assembly, homodimer or homooligomer.

It localises to the membrane. The protein resides in the clathrin-coated pit. It is found in the cytoplasmic vesicle. Its subcellular location is the clathrin-coated vesicle. The protein localises to the nucleus. Functionally, possible role in regulating endocytosis of the transferrin receptor at the plasma membrane. Alternatively, may function as a negative regulator of the amino acid-induced TOR signaling by inhibiting the formation of active Rag GTPase complexes. Preferentially binds inactive Rag GTPase complexes and prevents their interaction with the mTORC1 complex inhibiting its relocalization to lysosomes and its activation. Thereby, may indirectly regulate cell growth, proliferation and autophagy. This Xenopus laevis (African clawed frog) protein is SH3 domain-binding protein 4-A (sh3bp4-a).